A 236-amino-acid polypeptide reads, in one-letter code: UPF0502 protein Bpro_3844 (236 aa).

This sequence belongs to the UPF0502 family.

The chain is UPF0502 protein Bpro_3844 from Polaromonas sp. (strain JS666 / ATCC BAA-500).